A 186-amino-acid chain; its full sequence is Mediator of RNA polymerase II transcription subunit 10a (186 aa).

It belongs to the Mediator complex subunit 10 family. Mono-, di- and oligomers. Component of the Mediator complex. Interacts with GEBPL.

It localises to the nucleus. Component of the Mediator complex, a coactivator involved in the regulated transcription of nearly all RNA polymerase II-dependent genes. Mediator functions as a bridge to convey information from gene-specific regulatory proteins to the basal RNA polymerase II transcription machinery. The Mediator complex, having a compact conformation in its free form, is recruited to promoters by direct interactions with regulatory proteins and serves for the assembly of a functional pre-initiation complex with RNA polymerase II and the general transcription factors. This chain is Mediator of RNA polymerase II transcription subunit 10a, found in Arabidopsis thaliana (Mouse-ear cress).